A 227-amino-acid chain; its full sequence is Lipoprotein-releasing system ATP-binding protein LolD (227 aa).

The 222-residue stretch at Leu6–Ala227 folds into the ABC transporter domain. Position 43 to 50 (Ala43 to Ser50) interacts with ATP.

It belongs to the ABC transporter superfamily. Lipoprotein translocase (TC 3.A.1.125) family. The complex is composed of two ATP-binding proteins (LolD) and two transmembrane proteins (LolC and LolE).

It is found in the cell inner membrane. Functionally, part of the ABC transporter complex LolCDE involved in the translocation of mature outer membrane-directed lipoproteins, from the inner membrane to the periplasmic chaperone, LolA. Responsible for the formation of the LolA-lipoprotein complex in an ATP-dependent manner. The sequence is that of Lipoprotein-releasing system ATP-binding protein LolD from Jannaschia sp. (strain CCS1).